The following is a 244-amino-acid chain: Ribonuclease 3 (244 aa).

Residues 7 to 134 (FEEVEKTLNI…IIAAIYIDSG (128 aa)) form the RNase III domain. Glu-47 is a Mg(2+) binding site. Asp-51 is an active-site residue. Residues Asn-120 and Glu-123 each contribute to the Mg(2+) site. Glu-123 is an active-site residue. The region spanning 161-230 (DYKTNLQEIV…AQDALKKLKS (70 aa)) is the DRBM domain.

Belongs to the ribonuclease III family. Homodimer. Mg(2+) is required as a cofactor.

It localises to the cytoplasm. The catalysed reaction is Endonucleolytic cleavage to 5'-phosphomonoester.. Digests double-stranded RNA. Involved in the processing of primary rRNA transcript to yield the immediate precursors to the large and small rRNAs (23S and 16S). Processes some mRNAs, and tRNAs when they are encoded in the rRNA operon. Processes pre-crRNA and tracrRNA of type II CRISPR loci if present in the organism. This chain is Ribonuclease 3, found in Clostridium kluyveri (strain NBRC 12016).